Reading from the N-terminus, the 184-residue chain is Guanylate kinase (184 aa).

Residues 5 to 183 (NGLIVITGPS…ALLEIKKLIK (179 aa)) form the Guanylate kinase-like domain. ATP is bound at residue 12–19 (GPSGVGKG).

The protein belongs to the guanylate kinase family.

It is found in the cytoplasm. It carries out the reaction GMP + ATP = GDP + ADP. Functionally, essential for recycling GMP and indirectly, cGMP. This Prochlorococcus marinus (strain SARG / CCMP1375 / SS120) protein is Guanylate kinase.